A 317-amino-acid polypeptide reads, in one-letter code: MIFSTLERILTHISFSVVSIGITIYLITFLVDEIRGLYASSERGMTATAFCLTGLLITRWVYSRHFPLSDLYESLIFLSWSLSIIHKIFDFKNNQNHLSAITAPSAFFTQGFATSGFLTKMHQSRILVPALQVQWLMMHVSMMVLGYAALLCGSLLSTALLVITFRKVIRLFLKRKNFVHVNGSFCFSEIQYMNEKKNVFLNSLSARNYYRYQVIQQLDRWSYRIISLGFIFLTTGILSGAVWANEAWGSYWNWDPKETWAFITWTIFGIYLHTRTNTKWEGVNSAIVASMGFLIIWICYFGVNLLGIGLHSYGSFN.

A run of 8 helical transmembrane segments spans residues Ile-9–Phe-29, Thr-46–Ser-63, Leu-71–Phe-91, Leu-98–Leu-118, Met-143–Ile-163, Ile-225–Asn-245, Glu-258–His-273, and Ala-286–Leu-306.

The protein belongs to the CcmF/CycK/Ccl1/NrfE/CcsA family. May interact with Ccs1.

Its subcellular location is the plastid. It is found in the chloroplast thylakoid membrane. Functionally, required during biogenesis of c-type cytochromes (cytochrome c6 and cytochrome f) at the step of heme attachment. The polypeptide is Cytochrome c biogenesis protein CcsA (Citrus sinensis (Sweet orange)).